The primary structure comprises 130 residues: Transcription antitermination protein NusB (130 aa).

It belongs to the NusB family.

Functionally, involved in transcription antitermination. Required for transcription of ribosomal RNA (rRNA) genes. Binds specifically to the boxA antiterminator sequence of the ribosomal RNA (rrn) operons. In Macrococcus caseolyticus (strain JCSC5402) (Macrococcoides caseolyticum), this protein is Transcription antitermination protein NusB.